Consider the following 64-residue polypeptide: Large ribosomal subunit protein bL35 (64 aa).

Positions 1–44 (MPKLKTNRGAAKRFKVKASGRISRARSNHSHILTKKDPKRKRRL) are disordered. The segment covering 10–44 (AAKRFKVKASGRISRARSNHSHILTKKDPKRKRRL) has biased composition (basic residues).

Belongs to the bacterial ribosomal protein bL35 family.

This chain is Large ribosomal subunit protein bL35, found in Halorhodospira halophila (strain DSM 244 / SL1) (Ectothiorhodospira halophila (strain DSM 244 / SL1)).